Consider the following 201-residue polypeptide: Anthranilate synthase component 2 (201 aa).

A Glutamine amidotransferase type-1 domain is found at Lys2–Ser201. Gly59–Gly61 is an L-glutamine binding site. The active-site Nucleophile; for GATase activity is the Cys89. L-glutamine contacts are provided by residues Gln93 and Ser139–Leu140. Active-site for GATase activity residues include His182 and Glu184.

As to quaternary structure, heterotetramer consisting of two non-identical subunits: a beta subunit (TrpG) and a large alpha subunit (TrpE).

The enzyme catalyses chorismate + L-glutamine = anthranilate + pyruvate + L-glutamate + H(+). It functions in the pathway amino-acid biosynthesis; L-tryptophan biosynthesis; L-tryptophan from chorismate: step 1/5. Part of a heterotetrameric complex that catalyzes the two-step biosynthesis of anthranilate, an intermediate in the biosynthesis of L-tryptophan. In the first step, the glutamine-binding beta subunit (TrpG) of anthranilate synthase (AS) provides the glutamine amidotransferase activity which generates ammonia as a substrate that, along with chorismate, is used in the second step, catalyzed by the large alpha subunit of AS (TrpE) to produce anthranilate. In the absence of TrpG, TrpE can synthesize anthranilate directly from chorismate and high concentrations of ammonia. The polypeptide is Anthranilate synthase component 2 (trpG) (Leptospira biflexa).